The sequence spans 342 residues: Pre-mRNA-splicing factor 18 (342 aa).

M1 carries the post-translational modification N-acetylmethionine.

It belongs to the PRP18 family. As to quaternary structure, heterodimer with PPIH. Interacts with PRPF4 and with the spliceosome. Part of a complex containing U4/U6 snRNPs. Also detected in the cytoplasm. Detected in brain, heart, liver and skeletal muscle.

Its subcellular location is the nucleus speckle. Its function is as follows. Participates in the second step of pre-mRNA splicing. Down-regulates the expression of potassium channel subunits. The chain is Pre-mRNA-splicing factor 18 (Prpf18) from Rattus norvegicus (Rat).